Here is a 129-residue protein sequence, read N- to C-terminus: Small ribosomal subunit protein uS11 (129 aa).

The protein belongs to the universal ribosomal protein uS11 family. As to quaternary structure, part of the 30S ribosomal subunit. Interacts with proteins S7 and S18. Binds to IF-3.

Functionally, located on the platform of the 30S subunit, it bridges several disparate RNA helices of the 16S rRNA. Forms part of the Shine-Dalgarno cleft in the 70S ribosome. This is Small ribosomal subunit protein uS11 from Haemophilus influenzae (strain 86-028NP).